Reading from the N-terminus, the 708-residue chain is Matrix metalloproteinase-9 (708 aa).

Residues 1-19 (MSPWQPLLLVLLALGYSFA) form the signal peptide. A propeptide spans 20 to 107 (APHQRQPTYV…PRCGVPDVGK (88 aa)) (activation peptide). N-linked (GlcNAc...) asparagine glycosylation is present at Asn39. A Cysteine switch motif is present at residues 98–105 (PRCGVPDV). Cys100 is a binding site for Zn(2+). A glycan (N-linked (GlcNAc...) asparagine) is linked at Asn121. Ca(2+) contacts are provided by Asp132 and Asp166. Residues His176 and Asp178 each contribute to the Zn(2+) site. Ca(2+) is bound by residues Asp183, Gly184, Asp186, and Leu188. His191 contributes to the Zn(2+) binding site. Positions 198, 200, and 202 each coordinate Ca(2+). His204 is a Zn(2+) binding site. The Ca(2+) site is built by Asp206, Asp207, and Glu209. 3 consecutive Fibronectin type-II domains span residues 226–274 (ANGA…FCPS), 284–332 (GDGK…FCPT), and 343–391 (SAGE…FCPD). Disulfide bonds link Cys231-Cys257, Cys245-Cys272, Cys289-Cys315, Cys303-Cys330, Cys348-Cys374, and Cys362-Cys389. Zn(2+) is bound at residue His402. Residue Glu403 is part of the active site. Residues His406 and His412 each coordinate Zn(2+). A disordered region spans residues 441–520 (HHLYGRGSKP…SSTPDDNPCN (80 aa)). Low complexity predominate over residues 480 to 490 (PTGGPTVAPTG). The segment covering 491 to 502 (APSPGPTGPPTA) has biased composition (pro residues). A disulfide bridge connects residues Cys519 and Cys707. 4 Hemopexin repeats span residues 521–566 (VDVF…WPAF), 567–611 (PSKL…GLGS), 613–660 (VTLV…FSGV), and 661–707 (PWNS…LLQC).

The protein belongs to the peptidase M10A family. In terms of assembly, exists as monomer or homodimer; disulfide-linked. Also exists as heterodimer with LCN2. Macrophages and transformed cell lines produce only the monomeric form. Interacts with ECM1. Requires Zn(2+) as cofactor. It depends on Ca(2+) as a cofactor. N- and O-glycosylated.

It localises to the secreted. The protein resides in the extracellular space. It is found in the extracellular matrix. The enzyme catalyses Cleavage of gelatin types I and V and collagen types IV and V.. Its function is as follows. Matrix metalloproteinase that plays an essential role in local proteolysis of the extracellular matrix and in leukocyte migration. Could play a role in bone osteoclastic resorption. Cleaves KiSS1 at a Gly-|-Leu bond. Cleaves NINJ1 to generate the Secreted ninjurin-1 form. Cleaves type IV and type V collagen into large C-terminal three quarter fragments and shorter N-terminal one quarter fragments. Degrades fibronectin but not laminin or Pz-peptide. The polypeptide is Matrix metalloproteinase-9 (Mmp9) (Rattus norvegicus (Rat)).